Reading from the N-terminus, the 690-residue chain is DNA ligase (690 aa).

NAD(+) contacts are provided by residues 43–47 (DAEYD), 92–93 (SI), and Glu129. Lys131 functions as the N6-AMP-lysine intermediate in the catalytic mechanism. 4 residues coordinate NAD(+): Arg152, Glu188, Lys309, and Lys333. Zn(2+)-binding residues include Cys427, Cys430, Cys445, and Cys451. Residues 610–690 (VTPTPLSGKT…GLKELLDGHS (81 aa)) form the BRCT domain.

The protein belongs to the NAD-dependent DNA ligase family. LigA subfamily. Mg(2+) serves as cofactor. It depends on Mn(2+) as a cofactor.

The enzyme catalyses NAD(+) + (deoxyribonucleotide)n-3'-hydroxyl + 5'-phospho-(deoxyribonucleotide)m = (deoxyribonucleotide)n+m + AMP + beta-nicotinamide D-nucleotide.. Its function is as follows. DNA ligase that catalyzes the formation of phosphodiester linkages between 5'-phosphoryl and 3'-hydroxyl groups in double-stranded DNA using NAD as a coenzyme and as the energy source for the reaction. It is essential for DNA replication and repair of damaged DNA. This chain is DNA ligase, found in Albidiferax ferrireducens (strain ATCC BAA-621 / DSM 15236 / T118) (Rhodoferax ferrireducens).